A 464-amino-acid chain; its full sequence is Putative dipeptidase CPC735_014430 (464 aa).

The tract at residues 1–34 (MSTMSARDNEKGSARSQPSHAAASEIENVPRPSR) is disordered. The helical transmembrane segment at 40 to 56 (GTMIKVFIICACAGIVS) threads the bilayer. Zn(2+)-binding residues include histidine 93, aspartate 95, and glutamate 206. An intrachain disulfide couples cysteine 145 to cysteine 235. Residue histidine 233 participates in substrate binding. Positions 277 and 298 each coordinate Zn(2+). Substrate-binding residues include arginine 309 and aspartate 369. Asparagine 382 carries an N-linked (GlcNAc...) asparagine glycan.

Belongs to the metallo-dependent hydrolases superfamily. Peptidase M19 family. The cofactor is Zn(2+).

The protein localises to the membrane. The catalysed reaction is an L-aminoacyl-L-amino acid + H2O = 2 an L-alpha-amino acid. Functionally, hydrolyzes a wide range of dipeptides. In Coccidioides posadasii (strain C735) (Valley fever fungus), this protein is Putative dipeptidase CPC735_014430.